The following is a 522-amino-acid chain: Echinocystic acid 23-monooxygenase (522 aa).

A helical; Signal-anchor for type II membrane protein transmembrane segment spans residues 4–24 (LPYIATSIACIVILRWALNMM). N190 carries an N-linked (GlcNAc...) asparagine glycan. C470 serves as a coordination point for heme.

Belongs to the cytochrome P450 family. It depends on heme as a cofactor. As to expression, mainly expressed in flowers and flower buds, to a lesser extent in young leaves and, at low levels, in old leaves, stems and roots.

Its subcellular location is the membrane. The protein operates within secondary metabolite biosynthesis; terpenoid biosynthesis. Functionally, component of the oleanane-type triterpene saponins (e.g. saponarioside A and saponarioside B) biosynthetic pathway, leading to the production of natural products with detergent properties used as traditional sources of soap. An oxidoreductase that facilitates the oxidation of the methyl group to a carboxyl group at the C-23 position of echinocystic acid, resulting in the formation of quillaic acid (QA). The sequence is that of Echinocystic acid 23-monooxygenase from Saponaria officinalis (Common soapwort).